Reading from the N-terminus, the 608-residue chain is V-type ATP synthase subunit I (608 aa).

Transmembrane regions (helical) follow at residues 308–325 (ISFI…MIIG), 327–346 (AAYG…SFLL), 356–376 (GLIF…GTWF), 405–425 (IIFI…VWNF), 438–458 (IAQI…LNLI), 464–484 (FPMY…VFVF), 495–515 (CILK…SGFA), 517–537 (IISY…SASF), and 550–570 (IGLI…NIML).

It belongs to the V-ATPase 116 kDa subunit family.

The protein resides in the cell membrane. Functionally, produces ATP from ADP in the presence of a proton gradient across the membrane. The polypeptide is V-type ATP synthase subunit I (atpI) (Borreliella burgdorferi (strain ATCC 35210 / DSM 4680 / CIP 102532 / B31) (Borrelia burgdorferi)).